Consider the following 86-residue polypeptide: Protein Vpu (86 aa).

Residues 1–12 (MLELIGRIDYRL) lie on the Extracellular side of the membrane. Residues 13-33 (GVGALIVALIIVIIVWTIAYI) traverse the membrane as a helical segment. The Cytoplasmic portion of the chain corresponds to 34–86 (EYRKLVRQRRIDWLVKRIKERAEDSGNESGGDTEELETMVDMGHLRLLDGNDL). Phosphoserine; by host CK2 is present on residues Ser-58 and Ser-62.

Belongs to the HIV-1 VPU protein family. As to quaternary structure, homopentamer. Interacts with host CD4 and BRTC; these interactions induce proteasomal degradation of CD4. Interacts with host BST2; this interaction leads to the degradation of host BST2. Interacts with host FBXW11. Interacts with host AP1M1; this interaction plays a role in the mistrafficking and subsequent degradation of host BST2. Interacts with host RANBP2; this interaction allows Vpu to down-regulate host BLM sumoylation. Phosphorylated by host CK2. This phosphorylation is necessary for interaction with human BTRC and degradation of CD4.

The protein resides in the host membrane. With respect to regulation, ion channel activity is inhibited by hexamethylene amiloride in vitro. Its function is as follows. Enhances virion budding, by targeting human CD4 and Tetherin/BST2 to proteasome degradation. Degradation of CD4 prevents any unwanted premature interactions between viral Env and its host receptor CD4 in the endoplasmic reticulum. Degradation of antiretroviral protein Tetherin/BST2 is important for virion budding, as BST2 tethers new viral particles to the host cell membrane. Mechanistically, Vpu bridges either CD4 or BST2 to BTRC, a substrate recognition subunit of the Skp1/Cullin/F-box protein E3 ubiquitin ligase, induces their ubiquitination and subsequent proteasomal degradation. The alteration of the E3 ligase specificity by Vpu seems to promote the degradation of host IKBKB, leading to NF-kappa-B down-regulation and subsequent apoptosis. Acts as a viroporin that forms an oligomeric ion channel in membranes. Modulates the host DNA repair mechanisms to promote degradation of nuclear viral cDNA in cells that are already productively infected in order to suppress immune sensing and proviral hyper-integration (superinfection). Manipulates PML-NBs and modulates SUMOylation of host BLM protein thereby enhancing its DNA-end processing activity toward viral unintegrated linear DNA. Also inhibits RAD52-mediated homologous repair of viral cDNA, preventing the generation of dead-end circular forms of single copies of the long terminal repeat and permitting sustained nucleolytic attack. The chain is Protein Vpu from Homo sapiens (Human).